Consider the following 97-residue polypeptide: Biogenesis of lysosome-related organelles complex 1 subunit SNN1 (97 aa).

The stretch at 45–97 (VVRLKQIRNLLKEEQEYYNEEEGLGVERERLEELELRVEKLTQKYKKLLADCV) forms a coiled coil.

Belongs to the SNAPIN family. Component of the biogenesis of lysosome-related organelles complex-1 (BLOC-1).

The protein resides in the endosome. Its function is as follows. Component of the biogenesis of lysosome-related organelles complex-1 (BLOC-1), a complex involved in endosomal cargo sorting. In Lachancea thermotolerans (strain ATCC 56472 / CBS 6340 / NRRL Y-8284) (Yeast), this protein is Biogenesis of lysosome-related organelles complex 1 subunit SNN1 (SNN1).